Here is a 639-residue protein sequence, read N- to C-terminus: Alpha-dioxygenase 1 (639 aa).

The Proton acceptor role is filled by histidine 163. Ca(2+) is bound at residue aspartate 164. A heme b-binding site is contributed by histidine 168. Positions 216, 218, 220, and 222 each coordinate Ca(2+). Residues histidine 389, arginine 486, and arginine 490 each contribute to the heme b site.

The protein belongs to the peroxidase family. Forms monomers in solution. Heme b serves as cofactor. Ca(2+) is required as a cofactor. In terms of tissue distribution, expressed in roots (epiderm), mature flowers (e.g. anthers) and senescing leaves.

Its subcellular location is the lipid droplet. The catalysed reaction is a 1,2-saturated fatty acid + O2 = a (2R)-2-hydroperoxy fatty acid. The enzyme catalyses (9Z,12Z,15Z)-octadecatrienoate + O2 = (R)-2-hydroperoxy-(9Z,12Z,15Z)-octadecatrienoate. It catalyses the reaction hexadecanoate + O2 = (2R)-2-hydroperoxyhexadecanoate. It carries out the reaction (9Z,12Z)-octadecadienoate + O2 = (2R,9Z,12Z)-2-hydroperoxyoctadecadienoate. The catalysed reaction is (9Z)-octadecenoate + O2 = (2R,9Z)-2-hydroperoxyoctadecenoate. Alpha-dioxygenase that catalyzes the primary oxygenation step of a variety of 14-20 carbon fatty acids, containing up to three unsaturated bonds, into their corresponding 2R-hydroperoxides. Involved in the production of oxylipins that function in cell signaling, wound healing, and protection from infection. Mediates protection against oxidative stress and cell death, probably by generating some lipid-derived molecules. Promotes local and systemic plant defense in a salicylic acid (SA)-dependent manner, including the establishment of systemic acquired resistance (SAR) in response to incompatible interaction. Involved in a negative regulation of abscisic acid (ABA)-mediated signaling pathway. The polypeptide is Alpha-dioxygenase 1 (Arabidopsis thaliana (Mouse-ear cress)).